Reading from the N-terminus, the 500-residue chain is Versicolorin B desaturase (500 aa).

Residues 3–23 (FLSLPSLVIVIPVGYLLFHLG) traverse the membrane as a helical segment. N-linked (GlcNAc...) asparagine glycosylation is found at Asn-243 and Asn-400. Cys-438 contacts heme.

Belongs to the cytochrome P450 family. Heme is required as a cofactor.

It localises to the membrane. The catalysed reaction is versicolorin B + NADPH + O2 + H(+) = versicolorin A + NADP(+) + 2 H2O. The protein operates within mycotoxin biosynthesis; aflatoxin biosynthesis. In terms of biological role, versicolorin B desaturase; part of the gene cluster that mediates the biosynthesis of aflatoxins, a group of polyketide-derived furanocoumarins, and part of the most toxic and carcinogenic compounds among the known mycotoxins. The four major aflatoxins produced by A.parasiticus are aflatoxin B1 (AFB1), aflatoxin B2 (AFB2), aflatoxin G1 (AFG1) and aflatoxin G2 (AFG2). Within the aflatoxin pathway, the versicolorin B desaturase aflL catalyzes the conversion of versicolorin B (VERB) to versicolorin A (VERA). The biosynthesis of aflatoxins begins with the norsolorinic acid synthase aflC that combines a hexanoyl starter unit produced by the fatty acid synthase aflA/aflB and 7 malonyl-CoA extender units to synthesize the precursor NOR. The second step is the conversion of NOR to averantin and requires the norsolorinic acid ketoreductase aflD, which catalyzes the dehydration of norsolorinic acid to form (1'S)-averantin. The norsolorinic acid reductases aflE and aflF may also play a role in the conversion of NOR to AVN. The cytochrome P450 monooxygenase aflG then catalyzes the hydroxylation of AVN to 5'hydroxyaverantin (HAVN). The next step is performed by the 5'-hydroxyaverantin dehydrogenase aflH that transforms HAVN to 5'-oxoaverantin (OAVN) which is further converted to averufin (AVF) by aflK that plays a dual role in the pathway, as a 5'-oxoaverantin cyclase that mediates conversion of 5'-oxoaverantin, as well as a versicolorin B synthase in a later step in the pathway. The averufin oxidase aflI catalyzes the conversion of AVF to versiconal hemiacetal acetate (VHA). VHA is then the substrate for the versiconal hemiacetal acetate esterase aflJ to yield versiconal (VAL). Versicolorin B synthase aflK then converts VAL to versicolorin B (VERB) by closing the bisfuran ring of aflatoxin which is required for DNA-binding, thus giving to aflatoxin its activity as a mutagen. Then, the activity of the versicolorin B desaturase aflL leads to versicolorin A (VERA). A branch point starts from VERB since it can also be converted to dihydrodemethylsterigmatocystin (DMDHST), probably also by aflL, VERA being a precursor for aflatoxins B1 and G1, and DMDHST for aflatoxins B2 and G2. Next, the versicolorin reductase aflM and the cytochrome P450 monooxygenase aflN are involved in conversion of VERA to demethylsterigmatocystin (DMST). AflX and aflY seem also involved in this step, through probable aflX-mediated epoxide ring-opening step following versicolorin A oxidation and aflY-mediated Baeyer-Villiger oxidation required for the formation of the xanthone ring. The methyltransferase aflO then leads to the modification of DMST to sterigmatocystin (ST), and of DMDHST to dihydrosterigmatocystin (DHST). Both ST and DHST are then substrates of the O-methyltransferase aflP to yield O-methylsterigmatocystin (OMST) and dihydro-O-methylsterigmatocystin (DHOMST), respectively. Finally OMST is converted to aflatoxins B1 and G1, and DHOMST to aflatoxins B2 and G2, via the action of several enzymes including O-methylsterigmatocystin oxidoreductase aflQ, the cytochrome P450 monooxygenase aflU, but also the NADH-dependent flavin oxidoreductase nadA which is specifically required for the synthesis of AFG1. This Aspergillus parasiticus (strain ATCC 56775 / NRRL 5862 / SRRC 143 / SU-1) protein is Versicolorin B desaturase.